Reading from the N-terminus, the 176-residue chain is Lactoylglutathione lyase (176 aa).

The VOC domain occupies 23–167; the sequence is VFNHTMLRVK…DGYWVEIVQA (145 aa). Position 26 (histidine 26) interacts with Ni(2+). Arginine 30 serves as a coordination point for substrate. Glutamate 92 is a binding site for Ni(2+). 3 residues coordinate substrate: asparagine 96, arginine 114, and histidine 118. Histidine 118 and glutamate 163 together coordinate Ni(2+). Glutamate 163 (proton donor/acceptor) is an active-site residue.

The protein belongs to the glyoxalase I family. As to quaternary structure, monomer. Ni(2+) serves as cofactor. The cofactor is Zn(2+).

The catalysed reaction is (R)-S-lactoylglutathione = methylglyoxal + glutathione. It participates in secondary metabolite metabolism; methylglyoxal degradation; (R)-lactate from methylglyoxal: step 1/2. In terms of biological role, catalyzes the conversion of hemimercaptal, formed from methylglyoxal and glutathione, to S-lactoylglutathione. In Pseudomonas aeruginosa (strain ATCC 15692 / DSM 22644 / CIP 104116 / JCM 14847 / LMG 12228 / 1C / PRS 101 / PAO1), this protein is Lactoylglutathione lyase (gloA).